Here is a 123-residue protein sequence, read N- to C-terminus: Integration host factor subunit alpha (123 aa).

Belongs to the bacterial histone-like protein family. Heterodimer of an alpha and a beta chain.

Functionally, this protein is one of the two subunits of integration host factor, a specific DNA-binding protein that functions in genetic recombination as well as in transcriptional and translational control. The protein is Integration host factor subunit alpha of Polaromonas naphthalenivorans (strain CJ2).